A 307-amino-acid polypeptide reads, in one-letter code: uncharacterized protein (307 aa).

In terms of domain architecture, ABC transporter spans 5-233 (VQTNGLTKTY…NTEYIELVTP (229 aa)). 37 to 44 (GPNGAGKT) provides a ligand contact to ATP.

Belongs to the ABC transporter superfamily.

This is an uncharacterized protein from Bacillus subtilis (strain 168).